The sequence spans 157 residues: Tuberoinfundibular peptide of 39 residues (157 aa).

Positions methionine 1–alanine 25 are cleaved as a signal peptide. The propeptide occupies phenylalanine 26–glutamine 116.

Belongs to the parathyroid hormone family.

The protein localises to the secreted. Its function is as follows. Plays a role as a potent and selective agonist of pth2r resulting in adenyl cyclase activation and intracellular calcium level elevation. The polypeptide is Tuberoinfundibular peptide of 39 residues (Danio rerio (Zebrafish)).